The chain runs to 188 residues: UPF0157 protein VC_A0354 (188 aa).

The protein belongs to the UPF0157 (GrpB) family.

The protein is UPF0157 protein VC_A0354 of Vibrio cholerae serotype O1 (strain ATCC 39315 / El Tor Inaba N16961).